We begin with the raw amino-acid sequence, 160 residues long: Cyclic pyranopterin monophosphate synthase (160 aa).

Residues L76–H78 and M114–E115 each bind substrate. D129 is a catalytic residue.

This sequence belongs to the MoaC family. As to quaternary structure, homohexamer; trimer of dimers.

The enzyme catalyses (8S)-3',8-cyclo-7,8-dihydroguanosine 5'-triphosphate = cyclic pyranopterin phosphate + diphosphate. Its pathway is cofactor biosynthesis; molybdopterin biosynthesis. Catalyzes the conversion of (8S)-3',8-cyclo-7,8-dihydroguanosine 5'-triphosphate to cyclic pyranopterin monophosphate (cPMP). In Vibrio cholerae serotype O1 (strain ATCC 39541 / Classical Ogawa 395 / O395), this protein is Cyclic pyranopterin monophosphate synthase.